The sequence spans 834 residues: Serine/threonine-protein kinase TNNI3K (834 aa).

A lipid anchor (N-myristoyl glycine) is attached at glycine 2. A coiled-coil region spans residues 21-49; that stretch reads SESYAIIIERLEDDLQIKENEFQELRHIF. ANK repeat units follow at residues 66-96, 100-129, 133-162, 166-195, 199-229, 233-262, 268-297, 303-334, 338-367, and 380-409; these read RGLS…RPSR, NGFP…DVQQ, GGLT…NVNV, VFFT…DVNV, VGDR…DVNA, EDHV…EVQP, YGDT…TESL, FSET…NINH, DGHT…DMNL, and DEQT…PQDE. The 261-residue stretch at 462-722 folds into the Protein kinase domain; it reads IEFHEIIGSG…EVVRKLEECL (261 aa). ATP is bound by residues 468 to 476 and lysine 489; that span reads IGSGSFGKV. Aspartate 587 (proton acceptor) is an active-site residue. The disordered stretch occupies residues 815–834; the sequence is PMSPMHLHSRRNSGSFEDGN.

The protein belongs to the protein kinase superfamily. TKL Ser/Thr protein kinase family. MAP kinase kinase kinase subfamily. As to quaternary structure, interacts with TNNI3, ACTC, ACTA1, MYBPC3, AIP, FABP3 and HADHB. It depends on Mg(2+) as a cofactor. In terms of processing, autophosphorylated.

The protein resides in the nucleus. Its subcellular location is the cytoplasm. It carries out the reaction L-seryl-[protein] + ATP = O-phospho-L-seryl-[protein] + ADP + H(+). The catalysed reaction is L-threonyl-[protein] + ATP = O-phospho-L-threonyl-[protein] + ADP + H(+). Functionally, may play a role in cardiac physiology. The sequence is that of Serine/threonine-protein kinase TNNI3K from Mus musculus (Mouse).